The primary structure comprises 385 residues: 4-hydroxy-3-methylbut-2-en-1-yl diphosphate synthase (flavodoxin) 2 (385 aa).

Cys-281, Cys-284, Cys-316, and Glu-323 together coordinate [4Fe-4S] cluster.

The protein belongs to the IspG family. [4Fe-4S] cluster is required as a cofactor.

The catalysed reaction is (2E)-4-hydroxy-3-methylbut-2-enyl diphosphate + oxidized [flavodoxin] + H2O + 2 H(+) = 2-C-methyl-D-erythritol 2,4-cyclic diphosphate + reduced [flavodoxin]. The protein operates within isoprenoid biosynthesis; isopentenyl diphosphate biosynthesis via DXP pathway; isopentenyl diphosphate from 1-deoxy-D-xylulose 5-phosphate: step 5/6. Functionally, converts 2C-methyl-D-erythritol 2,4-cyclodiphosphate (ME-2,4cPP) into 1-hydroxy-2-methyl-2-(E)-butenyl 4-diphosphate. The sequence is that of 4-hydroxy-3-methylbut-2-en-1-yl diphosphate synthase (flavodoxin) 2 from Streptomyces avermitilis (strain ATCC 31267 / DSM 46492 / JCM 5070 / NBRC 14893 / NCIMB 12804 / NRRL 8165 / MA-4680).